Here is a 370-residue protein sequence, read N- to C-terminus: Uroporphyrinogen decarboxylase (370 aa).

Substrate is bound by residues 29–33 (RQAGR), aspartate 79, tyrosine 155, serine 210, and histidine 342.

Belongs to the uroporphyrinogen decarboxylase family. As to quaternary structure, homodimer.

It is found in the cytoplasm. It catalyses the reaction uroporphyrinogen III + 4 H(+) = coproporphyrinogen III + 4 CO2. The protein operates within porphyrin-containing compound metabolism; protoporphyrin-IX biosynthesis; coproporphyrinogen-III from 5-aminolevulinate: step 4/4. In terms of biological role, catalyzes the decarboxylation of four acetate groups of uroporphyrinogen-III to yield coproporphyrinogen-III. The polypeptide is Uroporphyrinogen decarboxylase (Verminephrobacter eiseniae (strain EF01-2)).